The chain runs to 269 residues: Formamidopyrimidine-DNA glycosylase (269 aa).

Catalysis depends on P2, which acts as the Schiff-base intermediate with DNA. Residue E3 is the Proton donor of the active site. Residue K57 is the Proton donor; for beta-elimination activity of the active site. Positions 90, 109, and 150 each coordinate DNA. The FPG-type zinc-finger motif lies at 235-269 (QVYGRGGEPCRVCGTPIQMAKHGQRSTFFCPACQH). The active-site Proton donor; for delta-elimination activity is the R259.

The protein belongs to the FPG family. As to quaternary structure, monomer. Requires Zn(2+) as cofactor.

It carries out the reaction Hydrolysis of DNA containing ring-opened 7-methylguanine residues, releasing 2,6-diamino-4-hydroxy-5-(N-methyl)formamidopyrimidine.. It catalyses the reaction 2'-deoxyribonucleotide-(2'-deoxyribose 5'-phosphate)-2'-deoxyribonucleotide-DNA = a 3'-end 2'-deoxyribonucleotide-(2,3-dehydro-2,3-deoxyribose 5'-phosphate)-DNA + a 5'-end 5'-phospho-2'-deoxyribonucleoside-DNA + H(+). In terms of biological role, involved in base excision repair of DNA damaged by oxidation or by mutagenic agents. Acts as a DNA glycosylase that recognizes and removes damaged bases. Has a preference for oxidized purines, such as 7,8-dihydro-8-oxoguanine (8-oxoG). Has AP (apurinic/apyrimidinic) lyase activity and introduces nicks in the DNA strand. Cleaves the DNA backbone by beta-delta elimination to generate a single-strand break at the site of the removed base with both 3'- and 5'-phosphates. The protein is Formamidopyrimidine-DNA glycosylase of Sodalis glossinidius (strain morsitans).